We begin with the raw amino-acid sequence, 452 residues long: Sesamin methylene transferase (452 aa).

It belongs to the GcvT family. As to quaternary structure, homotrimer.

It catalyses the reaction (+)-sesamin + (6S)-5,6,7,8-tetrahydrofolyl-(gamma-L-Glu)(n) = (+)-sesamin monocatechol + (6R)-5,10-methylenetetrahydrofolyl-(gamma-L-Glu)(n). It carries out the reaction (+)-sesamin monocatechol + (6S)-5,6,7,8-tetrahydrofolyl-(gamma-L-Glu)(n) = (+)-sesamin dicatechol + (6R)-5,10-methylenetetrahydrofolyl-(gamma-L-Glu)(n). Its function is as follows. Converts sesamin into sesamin mono- and di-catechol. Catalyzes a ring cleavage to transfer the methylene group to tetrahydrofolate (THF). Also active with (+)-episesamin, (-)-asarinin, sesaminol, (+)-sesamolin and piperine. In Sinomonas sp. (strain No.22), this protein is Sesamin methylene transferase.